We begin with the raw amino-acid sequence, 116 residues long: Large ribosomal subunit protein bL17 (116 aa).

The protein belongs to the bacterial ribosomal protein bL17 family. In terms of assembly, part of the 50S ribosomal subunit. Contacts protein L32.

This is Large ribosomal subunit protein bL17 from Synechococcus elongatus (strain ATCC 33912 / PCC 7942 / FACHB-805) (Anacystis nidulans R2).